Here is a 521-residue protein sequence, read N- to C-terminus: MALIILPFIGSLSVSESLVALITICVVYLILTYSHTKIPAGLQRLPGPKPLPIIGNVLEIGRKPYQTLTALSKRYGPVFQIQIGMRPVVVLSGSETVRQALIKQGEDFSGRPDLYTFQFISDGKSLAFSTDKVGVWRARRKLAYSALRSFSSLESTNQEYSCMLEEHICKEGEYLVKQLNTSMKANGSFDPFRNIVVSVANVICGMCFGRRYDHYDQELVSLVNLSEEFGQVVGTGNLADFIPVLRFLPSTAMKKFLSINDRFDKFVKKIVSEHYATYNKDNIRDITDSLIDHCEDRKLDENCNVQVSDEKIVGIVNDLFGAGFDTVSTGLSWSVMYLVAYPEIQERLYQEIKDSVGTERMPLLSDRPSLPFLDAFILEIFRHSSFLPFTIPHCTTKNTSLNGYFIPKDTCVFINQWQINHDPELWKDPFSFNPERFLSADGTELNRLEGEKVMLFGLGKRRCIGEVIARNEVFLFLAIIIQRLQFHMLPGEPLDMTPEYGLTMKHKRCQLRATMREKNEQ.

Phe-229 is a substrate binding site. Cys-463 contributes to the heme binding site.

The protein belongs to the cytochrome P450 family. Heme serves as cofactor.

The protein resides in the endoplasmic reticulum membrane. The protein localises to the microsome membrane. It catalyses the reaction an organic molecule + reduced [NADPH--hemoprotein reductase] + O2 = an alcohol + oxidized [NADPH--hemoprotein reductase] + H2O + H(+). Cytochromes P450 are a group of heme-thiolate monooxygenases. They oxidize a variety of structurally unrelated compounds, including steroids, fatty acids, and xenobiotics. The protein is Cytochrome P450 1A1 (cyp1a1) of Opsanus tau (Oyster toadfish).